A 263-amino-acid polypeptide reads, in one-letter code: Small ribosomal subunit protein uS2 (263 aa).

It belongs to the universal ribosomal protein uS2 family. As to quaternary structure, component of the small ribosomal subunit. Mature ribosomes consist of a small (40S) and a large (60S) subunit. The 40S subunit contains about 33 different proteins and 1 molecule of RNA (18S). The 60S subunit contains about 49 different proteins and 3 molecules of RNA (25S, 5.8S and 5S). Interacts with RPS21.

It is found in the cytoplasm. Functionally, required for the assembly and/or stability of the 40S ribosomal subunit. Required for the processing of the 20S rRNA-precursor to mature 18S rRNA in a late step of the maturation of 40S ribosomal subunits. In Vairimorpha ceranae (strain BRL01) (Microsporidian parasite), this protein is Small ribosomal subunit protein uS2.